A 585-amino-acid polypeptide reads, in one-letter code: Protein NRT1/ PTR FAMILY 8.3 (585 aa).

Glycine 2 is subject to N-acetylglycine. Residues 91-111 (WQGTCYLTPLIGAVLADAYWG) traverse the membrane as a helical segment. Threonine 115 carries the phosphothreonine modification. The next 10 membrane-spanning stretches (helical) occupy residues 116–136 (IACF…SASV), 154–174 (PAQY…TGGI), 200–220 (FFNW…SLLV), 228–248 (WGLG…SFFF), 351–371 (FPIW…STMF), 387–407 (LPPA…VPLY), 431–451 (MGIG…VEII), 472–492 (VLWQ…YFIG), 511–531 (ALAL…LTLV), and 556–576 (FFWL…FSAA).

Belongs to the major facilitator superfamily. Proton-dependent oligopeptide transporter (POT/PTR) (TC 2.A.17) family. As to expression, highly expressed in young leaves, roots and germinating seeds, intermediately in stems, flowers and mature leaves and at low level in siliques.

The protein localises to the vacuole membrane. With respect to regulation, inhibited by leucyl-ethionine. Functionally, peptide transporter. Mediates the transport of di- and tripeptides. High affinity, low capacity transporter. Can also transport histidine. The chain is Protein NRT1/ PTR FAMILY 8.3 (NPF8.3) from Arabidopsis thaliana (Mouse-ear cress).